Consider the following 215-residue polypeptide: Keratin-associated protein 26-1 (215 aa).

This sequence belongs to the PMG family. As to quaternary structure, interacts with hair keratins.

Functionally, in the hair cortex, hair keratin intermediate filaments are embedded in an interfilamentous matrix, consisting of hair keratin-associated proteins (KRTAP), which are essential for the formation of a rigid and resistant hair shaft through their extensive disulfide bond cross-linking with abundant cysteine residues of hair keratins. The matrix proteins include the high-sulfur and high-glycine-tyrosine keratins. This is Keratin-associated protein 26-1 from Mus musculus (Mouse).